The following is a 384-amino-acid chain: Cytochrome b (384 aa).

4 helical membrane-spanning segments follow: residues 32–52, 75–96, 111–131, and 176–196; these read FGSL…FLSM, FLLR…YFHI, WRVG…GYVL, and FFSL…VHLI. Heme b-binding residues include His-81 and His-95. 2 residues coordinate heme b: His-180 and His-194. Position 199 (His-199) interacts with a ubiquinone. The next 4 helical transmembrane spans lie at 224 to 244, 286 to 306, 318 to 338, and 345 to 366; these read SKDW…VYLM, FGGV…PLLH, FGRM…WIGS, and FIII…LIPL.

It belongs to the cytochrome b family. The main subunits of complex b-c1 are: cytochrome b, cytochrome c1 and the Rieske protein. Requires heme b as cofactor.

It localises to the mitochondrion inner membrane. Functionally, component of the ubiquinol-cytochrome c reductase complex (complex III or cytochrome b-c1 complex) that is part of the mitochondrial respiratory chain. The b-c1 complex mediates electron transfer from ubiquinol to cytochrome c. Contributes to the generation of a proton gradient across the mitochondrial membrane that is then used for ATP synthesis. This chain is Cytochrome b (MT-CYB), found in Acropora tenuis (Purple tipped acropora).